The sequence spans 130 residues: Small ribosomal subunit protein uS11 (130 aa).

This sequence belongs to the universal ribosomal protein uS11 family. Part of the 30S ribosomal subunit. Interacts with proteins S7 and S18. Binds to IF-3.

Located on the platform of the 30S subunit, it bridges several disparate RNA helices of the 16S rRNA. Forms part of the Shine-Dalgarno cleft in the 70S ribosome. This chain is Small ribosomal subunit protein uS11, found in Borreliella afzelii (strain PKo) (Borrelia afzelii).